Reading from the N-terminus, the 241-residue chain is Lipoprotein-releasing system ATP-binding protein LolD 2 (241 aa).

The ABC transporter domain maps to 6-241 (LDAQQLSKSY…YKSYEKSTAV (236 aa)). 43–50 (GASGSGKT) contacts ATP.

The protein belongs to the ABC transporter superfamily. Lipoprotein translocase (TC 3.A.1.125) family. As to quaternary structure, the complex is composed of two ATP-binding proteins (LolD) and two transmembrane proteins (LolC and LolE).

Its subcellular location is the cell inner membrane. Its function is as follows. Part of the ABC transporter complex LolCDE involved in the translocation of mature outer membrane-directed lipoproteins, from the inner membrane to the periplasmic chaperone, LolA. Responsible for the formation of the LolA-lipoprotein complex in an ATP-dependent manner. This is Lipoprotein-releasing system ATP-binding protein LolD 2 from Chlorobium chlorochromatii (strain CaD3).